The sequence spans 1015 residues: Probable beta-galactosidase B (1015 aa).

Residues 1–21 (MAHIYRLLLLLLSNLWFSAAA) form the signal peptide. An N-linked (GlcNAc...) asparagine glycan is attached at Asn-23. Tyr-90 is a binding site for substrate. N-linked (GlcNAc...) asparagine glycosylation occurs at Asn-100. Residues Asn-135, Ala-136, and Glu-137 each coordinate substrate. A glycan (N-linked (GlcNAc...) asparagine) is linked at Asn-172. A substrate-binding site is contributed by Asn-195. The active-site Proton donor is the Glu-196. N-linked (GlcNAc...) asparagine glycosylation is present at Asn-211. Tyr-265 provides a ligand contact to substrate. Cys-271 and Cys-324 are disulfide-bonded. Glu-308 acts as the Nucleophile in catalysis. Tyr-373 lines the substrate pocket. N-linked (GlcNAc...) asparagine glycosylation is found at Asn-411, Asn-441, Asn-456, Asn-554, Asn-679, Asn-735, Asn-775, Asn-821, and Asn-878.

It belongs to the glycosyl hydrolase 35 family.

The protein resides in the secreted. The catalysed reaction is Hydrolysis of terminal non-reducing beta-D-galactose residues in beta-D-galactosides.. Functionally, cleaves beta-linked terminal galactosyl residues from gangliosides, glycoproteins, and glycosaminoglycans. The polypeptide is Probable beta-galactosidase B (lacB) (Neosartorya fischeri (strain ATCC 1020 / DSM 3700 / CBS 544.65 / FGSC A1164 / JCM 1740 / NRRL 181 / WB 181) (Aspergillus fischerianus)).